The chain runs to 450 residues: UPF0210 protein CPE1497 (450 aa).

The protein belongs to the UPF0210 family. Homodimer.

This is UPF0210 protein CPE1497 from Clostridium perfringens (strain 13 / Type A).